Consider the following 535-residue polypeptide: CTP synthase (535 aa).

In terms of domain architecture, Glutamine amidotransferase type-1 spans 300 to 535 (RIGIVGKYAP…LVSASYERSK (236 aa)). Catalysis depends on for GATase activity residues C385, H509, and E511.

The protein belongs to the CTP synthase family.

It catalyses the reaction UTP + L-glutamine + ATP + H2O = CTP + L-glutamate + ADP + phosphate + 2 H(+). The protein operates within pyrimidine metabolism; CTP biosynthesis via de novo pathway; CTP from UDP: step 2/2. Functionally, catalyzes the ATP-dependent amination of UTP to CTP with either L-glutamine or ammonia as the source of nitrogen. The polypeptide is CTP synthase (Encephalitozoon cuniculi (strain GB-M1) (Microsporidian parasite)).